Here is a 236-residue protein sequence, read N- to C-terminus: Uridylate kinase (236 aa).

10-13 contributes to the ATP binding site; the sequence is KLSG. Gly52 is a UMP binding site. Residues Gly53 and Arg57 each coordinate ATP. UMP is bound by residues Asp72 and 133-140; that span reads TGNPFFTT. ATP is bound by residues Thr160, Tyr166, and Asp169.

Belongs to the UMP kinase family. As to quaternary structure, homohexamer.

It localises to the cytoplasm. The catalysed reaction is UMP + ATP = UDP + ADP. It functions in the pathway pyrimidine metabolism; CTP biosynthesis via de novo pathway; UDP from UMP (UMPK route): step 1/1. Inhibited by UTP. Catalyzes the reversible phosphorylation of UMP to UDP. In Parabacteroides distasonis (strain ATCC 8503 / DSM 20701 / CIP 104284 / JCM 5825 / NCTC 11152), this protein is Uridylate kinase.